The following is a 193-amino-acid chain: Thymidine kinase (193 aa).

Residues 15-22 (GCMYSGKT) and 87-90 (DELH) contribute to the ATP site. Glu88 (proton acceptor) is an active-site residue. Residues Cys147, Cys150, Cys185, and Cys188 each contribute to the Zn(2+) site.

It belongs to the thymidine kinase family. Homotetramer.

It localises to the cytoplasm. The catalysed reaction is thymidine + ATP = dTMP + ADP + H(+). This chain is Thymidine kinase, found in Chloroflexus aurantiacus (strain ATCC 29366 / DSM 635 / J-10-fl).